Reading from the N-terminus, the 602-residue chain is Non structural protein VP9' (602 aa).

It is found in the host cytoplasm. The sequence is that of Non structural protein VP9' from Callospermophilus lateralis (Golden-mantled ground squirrel).